Reading from the N-terminus, the 162-residue chain is NADH-quinone oxidoreductase subunit I (162 aa).

4Fe-4S ferredoxin-type domains follow at residues 52-82 (LRRY…IEAG) and 93-122 (TRYD…EGPN). The [4Fe-4S] cluster site is built by cysteine 62, cysteine 65, cysteine 68, cysteine 72, cysteine 102, cysteine 105, cysteine 108, and cysteine 112.

This sequence belongs to the complex I 23 kDa subunit family. In terms of assembly, NDH-1 is composed of 14 different subunits. Subunits NuoA, H, J, K, L, M, N constitute the membrane sector of the complex. The cofactor is [4Fe-4S] cluster.

The protein localises to the cell inner membrane. The catalysed reaction is a quinone + NADH + 5 H(+)(in) = a quinol + NAD(+) + 4 H(+)(out). In terms of biological role, NDH-1 shuttles electrons from NADH, via FMN and iron-sulfur (Fe-S) centers, to quinones in the respiratory chain. The immediate electron acceptor for the enzyme in this species is believed to be ubiquinone. Couples the redox reaction to proton translocation (for every two electrons transferred, four hydrogen ions are translocated across the cytoplasmic membrane), and thus conserves the redox energy in a proton gradient. This is NADH-quinone oxidoreductase subunit I from Azorhizobium caulinodans (strain ATCC 43989 / DSM 5975 / JCM 20966 / LMG 6465 / NBRC 14845 / NCIMB 13405 / ORS 571).